The chain runs to 322 residues: Fructose-1,6-bisphosphatase class 1 (322 aa).

4 residues coordinate Mg(2+): E84, D103, L105, and D106. Substrate contacts are provided by residues D106 to S109, N198, and K264. E270 lines the Mg(2+) pocket.

This sequence belongs to the FBPase class 1 family. As to quaternary structure, homotetramer. It depends on Mg(2+) as a cofactor.

The protein localises to the cytoplasm. It catalyses the reaction beta-D-fructose 1,6-bisphosphate + H2O = beta-D-fructose 6-phosphate + phosphate. It participates in carbohydrate biosynthesis; gluconeogenesis. This chain is Fructose-1,6-bisphosphatase class 1, found in Colwellia psychrerythraea (strain 34H / ATCC BAA-681) (Vibrio psychroerythus).